Here is a 174-residue protein sequence, read N- to C-terminus: Actin-related protein 2/3 complex subunit 3 (174 aa).

Belongs to the ARPC3 family. Component of the Arp2/3 complex composed of arpB/Arp2, arpC/Arp3, arcA/p41-arc, arcB/p34-arc, arcC/p21-arc, arcD/p20-arc and arcE/p16-arc. Interacts with carmil (via the region between the LRR domain and COOH-terminal proline-rich domain); carmil is required for Arp2/3-dependent actin nucleation. Arp2/3 complex, MyoB, MyoC, and the alpha and beta subunits of capping protein all form a larger complex with carmil.

The protein resides in the cytoplasm. It localises to the cytoskeleton. Its subcellular location is the cytosol. The protein localises to the cell cortex. It is found in the cell projection. The protein resides in the pseudopodium. Its function is as follows. Functions as a component of the Arp2/3 complex which is involved in regulation of actin polymerization and together with an activating nucleation-promoting factor (NPF) mediates the formation of branched actin networks. Seems to contact the pointed end of the daughter actin filament. The Arp2/3 complex is involved in organizing the actin system in cell motility and chemotaxis, in phagocytosis and macropinocytosis, at late steps of endosome processing, and in mitosis. In concert with a group of other proteins, the Arp2/3 complex plays a general role in the rapid activation and adaptation of the actin system to its multiple functions. This is Actin-related protein 2/3 complex subunit 3 (arcC) from Dictyostelium discoideum (Social amoeba).